A 244-amino-acid chain; its full sequence is Ferric aerobactin reductase IutB (244 aa).

Cys220, Cys221, Cys232, and Cys235 together coordinate [2Fe-2S] cluster.

As to quaternary structure, monomer. [2Fe-2S] cluster serves as cofactor.

The protein resides in the cytoplasm. It carries out the reaction 2 a Fe(II)-siderophore + NAD(+) + H(+) = 2 a Fe(III)-siderophore + NADH. The catalysed reaction is 2 a Fe(II)-siderophore + NADP(+) + H(+) = 2 a Fe(III)-siderophore + NADPH. In terms of biological role, ferric-siderophore reductase involved in iron removal from the siderophores after their transport into the cell. Acts as a major ferric-aerobactin reductase catalyzing the reduction of Fe(3+)-aerobactin, a citrate-hydroxamate siderophore produced by other bacteria. Catalyzes reduction of Fe(3+)-vulnibactin, a catecholate siderophore synthesized by V.vulnificus, in the absence of VuuB. Catalyzes reduction of ferrioxamine B and Fe(3+)-vibriobactin in vitro. No activity with Fe(3+)-enterobactin. Catalyzes reduction of ferric chelating compound Fe(3+)-nitrilotriacetic acid (NTA) in the presence of NADH, NADPH or reduced glutathione (GSH) as its electron donor in vitro. Also catalyzes reduction of ferric chelating compounds Fe(3+)-citrate and Fe(3+)-EDTA as well as non-complexed FeCl3 in the presence of GSH as its electron donor in vitro. Highest activity with Fe(3+)-NTA as electron acceptor and GSH as donor. This is Ferric aerobactin reductase IutB from Vibrio vulnificus.